We begin with the raw amino-acid sequence, 239 residues long: Ribonuclease PH (239 aa).

Phosphate-binding positions include Arg-86 and Gly-124 to Arg-126.

It belongs to the RNase PH family. In terms of assembly, homohexameric ring arranged as a trimer of dimers.

It catalyses the reaction tRNA(n+1) + phosphate = tRNA(n) + a ribonucleoside 5'-diphosphate. Its function is as follows. Phosphorolytic 3'-5' exoribonuclease that plays an important role in tRNA 3'-end maturation. Removes nucleotide residues following the 3'-CCA terminus of tRNAs; can also add nucleotides to the ends of RNA molecules by using nucleoside diphosphates as substrates, but this may not be physiologically important. Probably plays a role in initiation of 16S rRNA degradation (leading to ribosome degradation) during starvation. The sequence is that of Ribonuclease PH from Rickettsia bellii (strain OSU 85-389).